Here is a 283-residue protein sequence, read N- to C-terminus: 3-methyl-2-oxobutanoate hydroxymethyltransferase (283 aa).

The Mg(2+) site is built by Asp-46 and Asp-85. Residues 46–47, Asp-85, and Lys-115 contribute to the 3-methyl-2-oxobutanoate site; that span reads DS. Glu-117 is a Mg(2+) binding site. Glu-184 acts as the Proton acceptor in catalysis.

Belongs to the PanB family. Homodecamer; pentamer of dimers. The cofactor is Mg(2+).

The protein resides in the cytoplasm. The catalysed reaction is 3-methyl-2-oxobutanoate + (6R)-5,10-methylene-5,6,7,8-tetrahydrofolate + H2O = 2-dehydropantoate + (6S)-5,6,7,8-tetrahydrofolate. It participates in cofactor biosynthesis; (R)-pantothenate biosynthesis; (R)-pantoate from 3-methyl-2-oxobutanoate: step 1/2. Functionally, catalyzes the reversible reaction in which hydroxymethyl group from 5,10-methylenetetrahydrofolate is transferred onto alpha-ketoisovalerate to form ketopantoate. The chain is 3-methyl-2-oxobutanoate hydroxymethyltransferase from Acetivibrio thermocellus (strain ATCC 27405 / DSM 1237 / JCM 9322 / NBRC 103400 / NCIMB 10682 / NRRL B-4536 / VPI 7372) (Clostridium thermocellum).